We begin with the raw amino-acid sequence, 75 residues long: DNA-directed RNA polymerase subunit omega (75 aa).

This sequence belongs to the RNA polymerase subunit omega family. As to quaternary structure, the RNAP catalytic core consists of 2 alpha, 1 beta, 1 beta' and 1 omega subunit. When a sigma factor is associated with the core the holoenzyme is formed, which can initiate transcription.

It catalyses the reaction RNA(n) + a ribonucleoside 5'-triphosphate = RNA(n+1) + diphosphate. Promotes RNA polymerase assembly. Latches the N- and C-terminal regions of the beta' subunit thereby facilitating its interaction with the beta and alpha subunits. The protein is DNA-directed RNA polymerase subunit omega of Lysinibacillus sphaericus (strain C3-41).